A 287-amino-acid polypeptide reads, in one-letter code: Succinate dehydrogenase [ubiquinone] iron-sulfur subunit, mitochondrial (287 aa).

Residues 1–23 (MISNVLKRASVLARSNGIQSAFY) constitute a mitochondrion transit peptide. The region spanning 51-140 (FQVYRYNEET…GDTVKVYPLP (90 aa)) is the 2Fe-2S ferredoxin-type domain. [2Fe-2S] cluster contacts are provided by Cys101, Cys106, Cys109, and Cys121. The 31-residue stretch at 186 to 216 (NRHKLDGLYECILCACCSTSCPSYWWSEGGD) folds into the 4Fe-4S ferredoxin-type domain. The [4Fe-4S] cluster site is built by Cys196, Cys199, and Cys202. Residue Cys206 participates in [3Fe-4S] cluster binding. Trp211 provides a ligand contact to a ubiquinone. Residues Cys257 and Cys263 each coordinate [3Fe-4S] cluster. Cys267 provides a ligand contact to [4Fe-4S] cluster.

This sequence belongs to the succinate dehydrogenase/fumarate reductase iron-sulfur protein family. As to quaternary structure, component of complex II composed of four subunits: the flavoprotein (FP) SDHA, iron-sulfur protein (IP) SDHB, and a cytochrome b composed of a large and a small subunit. [2Fe-2S] cluster serves as cofactor. [3Fe-4S] cluster is required as a cofactor. It depends on [4Fe-4S] cluster as a cofactor.

The protein localises to the mitochondrion inner membrane. It carries out the reaction a quinone + succinate = fumarate + a quinol. The protein operates within carbohydrate metabolism; tricarboxylic acid cycle; fumarate from succinate (eukaryal route): step 1/1. Iron-sulfur protein (IP) subunit of succinate dehydrogenase (SDH) that is involved in complex II of the mitochondrial electron transport chain and is responsible for transferring electrons from succinate to ubiquinone (coenzyme Q). In Dictyostelium discoideum (Social amoeba), this protein is Succinate dehydrogenase [ubiquinone] iron-sulfur subunit, mitochondrial (sdhB).